Here is a 92-residue protein sequence, read N- to C-terminus: Long neurotoxin 3FTx-Oxy1 (92 aa).

The first 21 residues, 1–21 (MKTLLLTLVVVTIVCLDLGYT), serve as a signal peptide directing secretion. Intrachain disulfides connect Cys-24-Cys-42, Cys-35-Cys-63, Cys-48-Cys-52, Cys-67-Cys-79, and Cys-80-Cys-85.

The protein belongs to the three-finger toxin family. Long-chain subfamily. Type II alpha-neurotoxin sub-subfamily. Expressed by the venom gland.

It is found in the secreted. Functionally, binds with high affinity to muscular (alpha-1/CHRNA1) and neuronal (alpha-7/CHRNA7) nicotinic acetylcholine receptor (nAChR) and inhibits acetylcholine from binding to the receptor, thereby impairing neuromuscular and neuronal transmission. The protein is Long neurotoxin 3FTx-Oxy1 of Oxyuranus microlepidotus (Inland taipan).